The following is a 429-amino-acid chain: Formate-dependent phosphoribosylglycinamide formyltransferase (429 aa).

Residues 26–27 (EL) and Glu86 each bind N(1)-(5-phospho-beta-D-ribosyl)glycinamide. ATP contacts are provided by residues Arg118, Lys159, 199–202 (EEHI), and Glu207. The 197-residue stretch at 123–319 (ETLVKEAKVP…EFGLHLRAVL (197 aa)) folds into the ATP-grasp domain. Residues Glu276 and Glu288 each contribute to the Mg(2+) site. Residues Asp295, Lys375, and 382-383 (RR) each bind N(1)-(5-phospho-beta-D-ribosyl)glycinamide.

It belongs to the PurK/PurT family. In terms of assembly, homodimer.

The enzyme catalyses N(1)-(5-phospho-beta-D-ribosyl)glycinamide + formate + ATP = N(2)-formyl-N(1)-(5-phospho-beta-D-ribosyl)glycinamide + ADP + phosphate + H(+). Its pathway is purine metabolism; IMP biosynthesis via de novo pathway; N(2)-formyl-N(1)-(5-phospho-D-ribosyl)glycinamide from N(1)-(5-phospho-D-ribosyl)glycinamide (formate route): step 1/1. Involved in the de novo purine biosynthesis. Catalyzes the transfer of formate to 5-phospho-ribosyl-glycinamide (GAR), producing 5-phospho-ribosyl-N-formylglycinamide (FGAR). Formate is provided by PurU via hydrolysis of 10-formyl-tetrahydrofolate. This chain is Formate-dependent phosphoribosylglycinamide formyltransferase, found in Pyrococcus furiosus (strain ATCC 43587 / DSM 3638 / JCM 8422 / Vc1).